The following is a 370-amino-acid chain: Histidinol-phosphate aminotransferase 2 (370 aa).

Lys-230 carries the post-translational modification N6-(pyridoxal phosphate)lysine.

This sequence belongs to the class-II pyridoxal-phosphate-dependent aminotransferase family. Histidinol-phosphate aminotransferase subfamily. Homodimer. The cofactor is pyridoxal 5'-phosphate.

It catalyses the reaction L-histidinol phosphate + 2-oxoglutarate = 3-(imidazol-4-yl)-2-oxopropyl phosphate + L-glutamate. It functions in the pathway amino-acid biosynthesis; L-histidine biosynthesis; L-histidine from 5-phospho-alpha-D-ribose 1-diphosphate: step 7/9. This is Histidinol-phosphate aminotransferase 2 from Pseudomonas fluorescens (strain Pf0-1).